We begin with the raw amino-acid sequence, 140 residues long: UPF0134 protein MPN_130 (140 aa).

The protein belongs to the UPF0134 family.

The protein is UPF0134 protein MPN_130 of Mycoplasma pneumoniae (strain ATCC 29342 / M129 / Subtype 1) (Mycoplasmoides pneumoniae).